We begin with the raw amino-acid sequence, 271 residues long: Aquaporin-11 (271 aa).

The Cytoplasmic portion of the chain corresponds to 1–14 (MSALLGLRPEVQDT). The chain crosses the membrane as a helical span at residues 15–35 (CISLGLMLLFVLFVGLARVIA). Residues 36 to 41 (RQQLHR) lie on the Lumenal side of the membrane. The chain crosses the membrane as a helical span at residues 42–62 (PVVHAFVLEFLATFQLCCCTH). The Cytoplasmic segment spans residues 63 to 76 (ELQVLSEQDSAHPT). The helical transmembrane segment at 77 to 97 (WTLTLIYFFSLVHGLTLVGTA) threads the bilayer. The Lumenal portion of the chain corresponds to 98-166 (SNPCGVMMQM…NPIHTDMSKA (69 aa)). The short motif at 99-101 (NPC) is the NPC element. The helical transmembrane segment at 167 to 187 (IIIEAICSFIFHSALLHFQEV) threads the bilayer. Residues 188-194 (RTKLRIH) are Cytoplasmic-facing. The helical transmembrane segment at 195–215 (LLAALITFLAYAGGSLTGALF) threads the bilayer. The NPA signature appears at 216–218 (NPA). Over 216–234 (NPALALSLHFPCFDELFYK) the chain is Lumenal. Residues 235 to 255 (FFVVYWLAPSVGVLMMILMFS) form a helical membrane-spanning segment. Residues 256–271 (FFLPWLHNNQMTNKKE) lie on the Cytoplasmic side of the membrane.

This sequence belongs to the MIP/aquaporin (TC 1.A.8) family. AQP11/AQP12 subfamily. Homodimer; disulfide-linked. Homotetramer. Can also form homomultimer. Post-translationally, not glycosylated. In terms of tissue distribution, highly expressed in the S1 proximal tubule segment,. Expressed in the testis, kidney, and liver. Weakly expressed in the heart, brain, and muscle. Highly expressed in the testis. Expressed in the proximal tubule of the cortex of 8-day-old mouse kidney. Expressed in retina specifically at retinal Mueller glial cells. Expressed in brain. Expressed abundantly at the choroid plexus but also expressed weakly in the parenchyma. Expressed at the capillary endothelium in the cerebral white matter. Expressed in adult testis, in the elongated spermatids (ES) and in residual bodies inside Sertoli cells.

It localises to the endoplasmic reticulum membrane. Its subcellular location is the cytoplasmic vesicle membrane. The protein resides in the cell membrane. The enzyme catalyses H2O(in) = H2O(out). It catalyses the reaction glycerol(in) = glycerol(out). The catalysed reaction is H2O2(out) = H2O2(in). Functionally, channel protein that facilitates the transport of water, glycerol and hydrogen peroxide across membrane of cell or organelles guaranteeing intracellular homeostasis in several organes like liver, kidney and brain. In situation of stress, participates in endoplasmic reticulum (ER) homeostasis by regulating redox homeostasis through the transport of hydrogen peroxide across the endoplasmic reticulum membrane thereby regulating the oxidative stress through the NADPH oxidase 2 pathway. Plays a role by maintaining an environment suitable for translation or protein foldings in the ER lumen namely by participating in the PKD1 glycosylation processing resulting in regulation of PKD1 membrane trafficking thereby preventing the accumulation of unfolding protein in ER. Plays a role in the proximal tubule function by regulating its endosomal acidification. May play a role in postnatal kidney development. The sequence is that of Aquaporin-11 from Mus musculus (Mouse).